We begin with the raw amino-acid sequence, 461 residues long: uncharacterized protein (461 aa).

A compositionally biased stretch (basic and acidic residues) spans 1–19 (MEKCSHESGRHSAENDGKY). The disordered stretch occupies residues 1–21 (MEKCSHESGRHSAENDGKYDI).

It belongs to the CapA family.

Its function is as follows. Could be involved in the biosynthesis of a cell wall component. This is an uncharacterized protein from Sinorhizobium fredii (strain NBRC 101917 / NGR234).